Consider the following 468-residue polypeptide: Probable Xaa-Pro aminopeptidase PEPP (468 aa).

Residues Asp264, Asp275, Glu398, and Glu438 each contribute to the Mn(2+) site.

It belongs to the peptidase M24B family. The cofactor is Mn(2+).

It carries out the reaction Release of any N-terminal amino acid, including proline, that is linked to proline, even from a dipeptide or tripeptide.. Functionally, catalyzes the removal of a penultimate prolyl residue from the N-termini of peptides. The polypeptide is Probable Xaa-Pro aminopeptidase PEPP (PEPP) (Ajellomyces dermatitidis (strain ER-3 / ATCC MYA-2586) (Blastomyces dermatitidis)).